The sequence spans 187 residues: Elongation factor P (187 aa).

Lysine 34 carries the post-translational modification N6-(3,6-diaminohexanoyl)-5-hydroxylysine.

Belongs to the elongation factor P family. Post-translationally, may be beta-lysylated on the epsilon-amino group of Lys-34 by the combined action of EpmA and EpmB, and then hydroxylated on the C5 position of the same residue by EpmC (if this protein is present). Lysylation is critical for the stimulatory effect of EF-P on peptide-bond formation. The lysylation moiety may extend toward the peptidyltransferase center and stabilize the terminal 3-CCA end of the tRNA. Hydroxylation of the C5 position on Lys-34 may allow additional potential stabilizing hydrogen-bond interactions with the P-tRNA.

Its subcellular location is the cytoplasm. It participates in protein biosynthesis; polypeptide chain elongation. Functionally, involved in peptide bond synthesis. Alleviates ribosome stalling that occurs when 3 or more consecutive Pro residues or the sequence PPG is present in a protein, possibly by augmenting the peptidyl transferase activity of the ribosome. Modification of Lys-34 is required for alleviation. In Thioalkalivibrio sulfidiphilus (strain HL-EbGR7), this protein is Elongation factor P.